A 323-amino-acid chain; its full sequence is Mediator of RNA polymerase II transcription subunit 4 (323 aa).

Positions 1 to 36 are disordered; sequence MLPFKKADSPFKSNPVSRVGSSTRLNQLGNIKSNPT. Polar residues predominate over residues 11-36; it reads FKSNPVSRVGSSTRLNQLGNIKSNPT. Residues 79 to 167 adopt a coiled-coil conformation; sequence MVQKVNEYER…VSYRNELKKL (89 aa). 2 stretches are compositionally biased toward basic and acidic residues: residues 241 to 262 and 282 to 303; these read HELG…KVDH and DEQR…KEEQ. The interval 241–323 is disordered; that stretch reads HELGETDKEN…LFDPDDEYSD (83 aa).

Belongs to the Mediator complex subunit 4 family. As to quaternary structure, component of the Mediator complex.

It localises to the nucleus. In terms of biological role, component of the Mediator complex, a coactivator involved in the regulated transcription of nearly all RNA polymerase II-dependent genes. Mediator functions as a bridge to convey information from gene-specific regulatory proteins to the basal RNA polymerase II transcription machinery. Mediator is recruited to promoters by direct interactions with regulatory proteins and serves as a scaffold for the assembly of a functional preinitiation complex with RNA polymerase II and the general transcription factors. The polypeptide is Mediator of RNA polymerase II transcription subunit 4 (MED4) (Candida albicans (strain SC5314 / ATCC MYA-2876) (Yeast)).